A 210-amino-acid chain; its full sequence is Isomeliandiol synthase ISM1 (210 aa).

Helical transmembrane passes span 17–37, 50–70, 107–127, 135–155, and 172–192; these read FTLHAWNGLSLFLIISGTWFI, LLCWWALTGLIHIIQEGYFVF, IEGMAAVVMGPLSLLVVYAIV, ILQFGVSIAQLYGACLYFLTA, and YYVGQSSIWIIVPSLIAINFW. The 143-residue stretch at 46 to 188 folds into the EXPERA domain; sequence GDRLLLCWWA…IWIIVPSLIA (143 aa).

This sequence belongs to the EBP family.

The protein resides in the membrane. The enzyme catalyses 7,8-epoxymelianol = isomeliandiol. The protein operates within secondary metabolite biosynthesis; terpenoid biosynthesis. In terms of biological role, isomerase involved in the biosynthesis of limonoids and quassinoids triterpene natural products such as ailanthone, chaparrinone, glaucarubinone and amarolide, allelopathic degraded triterpene lactones inhibiting the growth of other plants, and possessing antimalarial, antifeedant, insecticidal, anti-inflammatory and anticancer activities. Catalyzes the conversion of 7,8-epoxymelianol to isomeliandiol via skeletal rearrangements. This is Isomeliandiol synthase ISM1 from Ailanthus altissima (Tree-of-heaven).